The chain runs to 308 residues: Acyltransferase drtE (308 aa).

Positions 35-159 (PALVMNPGYN…AAEAKDNFSR (125 aa)) constitute an AB hydrolase-1 domain.

It belongs to the polyketide transferase af380 family.

Its pathway is secondary metabolite biosynthesis; terpenoid biosynthesis. In terms of biological role, acyltransferase; part of the gene cluster that mediates the biosynthesis of various drimane-type sesquiterpene esters, compounds that exhibit diverse biological activities and are widely present in eukaryotes. The pathway begins with the synthesis of the backbone drimenol by the terpene cyclase drtB using farnesyl pyrophosphate (FPP) as substrate. The cytochrome P450 monooxygenase drtD is then responsible for the hydroxylations at C-6, C-9 and C-12, as well as the oxidation of hydroxyl groups at C-6 and C-11 to a ketone and an aldehyde, respectively. Then, the biosynthesis can go in two directions, either the hydroxylated drimenol is further hydroxylated at C-2 and C-3 by an enzyme(s) not associated with the drt cluster, or the FAD-binding oxidoreductase drtC further oxidizes C-11 or C-12 to form the butyrolactone ring. DrtB, drtD and drtC are solely responsible for the formation of the different drimane structures observed during drimane sesquiterpenes biosynthesis. The polyketide synthase drtA synthesizes different lengths (C6 and C8) of PKS chains, which are then oxidized to varying degrees by the short-chain dehydrogenase drtF. Finally, these PKS chains are transferred onto drimane sesquiterpenes by the acyltransferase drtE, forming the sesquiterpene esters. In addition to the different fatty acyl-CoA chains produced by drtA, drtE is also able to use cinnamoyl-CoA as a substrate. This chain is Acyltransferase drtE, found in Aspergillus calidoustus.